Reading from the N-terminus, the 316-residue chain is Olfactory receptor 10H3 (316 aa).

Over M1–L25 the chain is Extracellular. Residues P26 to I46 form a helical membrane-spanning segment. Over M47–R54 the chain is Cytoplasmic. The chain crosses the membrane as a helical span at residues R55 to T75. Residues V76–A99 are Extracellular-facing. Residues C98 and C190 are joined by a disulfide bond. A helical transmembrane segment spans residues I100–G120. Over Y121–P139 the chain is Cytoplasmic. A helical transmembrane segment spans residues R140–V160. At T161–V197 the chain is on the extracellular side. The chain crosses the membrane as a helical span at residues I198–L218. Over S219–K238 the chain is Cytoplasmic. The chain crosses the membrane as a helical span at residues T239–L259. Residues I260–S272 lie on the Extracellular side of the membrane. Residues D273–S293 form a helical membrane-spanning segment. At L294–S316 the chain is on the cytoplasmic side.

It belongs to the G-protein coupled receptor 1 family.

It localises to the cell membrane. Functionally, odorant receptor. In Homo sapiens (Human), this protein is Olfactory receptor 10H3 (OR10H3).